Here is a 307-residue protein sequence, read N- to C-terminus: Ornithine carbamoyltransferase (307 aa).

Carbamoyl phosphate-binding positions include 56–59 (STRT), Q83, R107, and 134–137 (HPCQ). Residues N165, D223, and 227 to 228 (SM) contribute to the L-ornithine site. Residues 263-264 (CL) and R291 each bind carbamoyl phosphate.

Belongs to the aspartate/ornithine carbamoyltransferase superfamily. OTCase family.

It is found in the cytoplasm. The enzyme catalyses carbamoyl phosphate + L-ornithine = L-citrulline + phosphate + H(+). Its pathway is amino-acid degradation; L-arginine degradation via ADI pathway; carbamoyl phosphate from L-arginine: step 2/2. Reversibly catalyzes the transfer of the carbamoyl group from carbamoyl phosphate (CP) to the N(epsilon) atom of ornithine (ORN) to produce L-citrulline. The polypeptide is Ornithine carbamoyltransferase (Cupriavidus taiwanensis (strain DSM 17343 / BCRC 17206 / CCUG 44338 / CIP 107171 / LMG 19424 / R1) (Ralstonia taiwanensis (strain LMG 19424))).